The following is a 521-amino-acid chain: MAASIGALKSSPSSNNCINERRNDSTRAVSSRNLSFSSSHLAGDKLMPVSSLRSQGVRFNVRRSPMIVSPKAVSDSQNSQTCLDPDASRSVLGIILGGGAGTRLYPLTKKRAKPAVPLGANYRLIDIPVSNCLNSNISKIYVLTQFNSASLNRHLSRAYASNMGGYKNEGFVEVLAAQQSPENPDWFQGTADAVRQYLWLFEEHTVLEYLILAGDHLYRMDYEKFIQAHRETDADITVAALPMDEKRATAFGLMKIDEEGRIIEFAEKPQGEQLQAMKVDTTILGLDDKRAKEMPFIASMGIYVISKDVMLNLLRDKFPGANDFGSEVIPGATSLGMRVQAYLYDGYWEDIGTIEAFYNANLGITKKPVPDFSFYDRSAPIYTQPRYLPPSKMLDADVTDSVIGEGCVIKNCKIHHSVVGLRSCISEGAIIEDSLLMGADYYETDADRKLLAAKGSVPIGIGKNCHIKRAIIDKNARIGDNVKIINKDNVQEAARETDGYFIKSGIVTVIKDALIPSGIII.

The tract at residues 1–32 (MAASIGALKSSPSSNNCINERRNDSTRAVSSR) is disordered. The transit peptide at 1–72 (MAASIGALKS…RSPMIVSPKA (72 aa)) directs the protein to the chloroplast. A substrate-binding site is contributed by K268. The interval 444-454 (TDADRKLLAAK) is allosteric regulation.

This sequence belongs to the bacterial/plant glucose-1-phosphate adenylyltransferase family. In terms of assembly, heterotetramer. As to expression, leaves and tubers.

The protein resides in the plastid. Its subcellular location is the chloroplast. It is found in the amyloplast. It carries out the reaction alpha-D-glucose 1-phosphate + ATP + H(+) = ADP-alpha-D-glucose + diphosphate. Its pathway is glycan biosynthesis; starch biosynthesis. With respect to regulation, activated by 3'phosphoglycerate, inhibited by orthophosphate. Allosteric regulation. In terms of biological role, this protein plays a role in synthesis of starch. It catalyzes the synthesis of the activated glycosyl donor, ADP-glucose from Glc-1-P and ATP. The polypeptide is Glucose-1-phosphate adenylyltransferase small subunit, chloroplastic/amyloplastic (Solanum tuberosum (Potato)).